We begin with the raw amino-acid sequence, 25 residues long: Antimicrobial peptide 2 (25 aa).

As to expression, expressed by the skin glands.

Its subcellular location is the secreted. Functionally, has very strong antibacterial activity against Gram-positive bacterium S.aureus and very weak activity against Gram-negative bacterium E.coli. This is Antimicrobial peptide 2 from Xenopus tropicalis (Western clawed frog).